Consider the following 72-residue polypeptide: Translation initiation factor IF-1 (72 aa).

One can recognise an S1-like domain in the interval 1-72 (MAKQDVIELE…SRGRITYRYK (72 aa)).

The protein belongs to the IF-1 family. In terms of assembly, component of the 30S ribosomal translation pre-initiation complex which assembles on the 30S ribosome in the order IF-2 and IF-3, IF-1 and N-formylmethionyl-tRNA(fMet); mRNA recruitment can occur at any time during PIC assembly.

It localises to the cytoplasm. In terms of biological role, one of the essential components for the initiation of protein synthesis. Stabilizes the binding of IF-2 and IF-3 on the 30S subunit to which N-formylmethionyl-tRNA(fMet) subsequently binds. Helps modulate mRNA selection, yielding the 30S pre-initiation complex (PIC). Upon addition of the 50S ribosomal subunit IF-1, IF-2 and IF-3 are released leaving the mature 70S translation initiation complex. The protein is Translation initiation factor IF-1 of Staphylococcus epidermidis (strain ATCC 35984 / DSM 28319 / BCRC 17069 / CCUG 31568 / BM 3577 / RP62A).